The following is a 597-amino-acid chain: Aspartate--tRNA(Asp/Asn) ligase (597 aa).

Glu175 provides a ligand contact to L-aspartate. Positions 199–202 are aspartate; it reads QLFK. Residue Arg221 coordinates L-aspartate. ATP is bound by residues 221–223 and Gln230; that span reads RDE. His453 is an L-aspartate binding site. Residue Glu487 participates in ATP binding. Arg494 is a binding site for L-aspartate. 539 to 542 contacts ATP; it reads GWDR. The interval 562 to 597 is disordered; sequence SGGGVDPLTDAPAPITPEQRKESGIDAKPKKKETKN. Over residues 579–589 the composition is skewed to basic and acidic residues; that stretch reads EQRKESGIDAK.

This sequence belongs to the class-II aminoacyl-tRNA synthetase family. Type 1 subfamily. In terms of assembly, homodimer.

Its subcellular location is the cytoplasm. It catalyses the reaction tRNA(Asx) + L-aspartate + ATP = L-aspartyl-tRNA(Asx) + AMP + diphosphate. Functionally, aspartyl-tRNA synthetase with relaxed tRNA specificity since it is able to aspartylate not only its cognate tRNA(Asp) but also tRNA(Asn). Reaction proceeds in two steps: L-aspartate is first activated by ATP to form Asp-AMP and then transferred to the acceptor end of tRNA(Asp/Asn). The protein is Aspartate--tRNA(Asp/Asn) ligase of Corynebacterium kroppenstedtii (strain DSM 44385 / JCM 11950 / CIP 105744 / CCUG 35717).